A 141-amino-acid chain; its full sequence is Large ribosomal subunit protein uL11 (141 aa).

Belongs to the universal ribosomal protein uL11 family. In terms of assembly, part of the ribosomal stalk of the 50S ribosomal subunit. Interacts with L10 and the large rRNA to form the base of the stalk. L10 forms an elongated spine to which L12 dimers bind in a sequential fashion forming a multimeric L10(L12)X complex. Post-translationally, one or more lysine residues are methylated.

In terms of biological role, forms part of the ribosomal stalk which helps the ribosome interact with GTP-bound translation factors. This Alkaliphilus metalliredigens (strain QYMF) protein is Large ribosomal subunit protein uL11.